A 619-amino-acid polypeptide reads, in one-letter code: 2-isopropylmalate synthase (619 aa).

The Pyruvate carboxyltransferase domain occupies 61-336; the sequence is PRWLSTDLRD…SPNLDFSDLT (276 aa). A divalent metal cation contacts are provided by D70, H275, H277, and N311.

Belongs to the alpha-IPM synthase/homocitrate synthase family. LeuA type 2 subfamily. In terms of assembly, homodimer. The cofactor is a divalent metal cation.

It is found in the cytoplasm. The protein resides in the mitochondrion. The catalysed reaction is 3-methyl-2-oxobutanoate + acetyl-CoA + H2O = (2S)-2-isopropylmalate + CoA + H(+). The protein operates within amino-acid biosynthesis; L-leucine biosynthesis; L-leucine from 3-methyl-2-oxobutanoate: step 1/4. Functionally, catalyzes the condensation of the acetyl group of acetyl-CoA with 3-methyl-2-oxobutanoate (2-oxoisovalerate) to form 3-carboxy-3-hydroxy-4-methylpentanoate (2-isopropylmalate). This is 2-isopropylmalate synthase (LEU4) from Saccharomyces cerevisiae (strain ATCC 204508 / S288c) (Baker's yeast).